A 360-amino-acid chain; its full sequence is Squamosa promoter-binding-like protein 7 (360 aa).

Over residues 74–89 (AQGSGGGGGGGGGGSA) the composition is skewed to gly residues. A disordered region spans residues 74–98 (AQGSGGGGGGGGGGSADQGKRKEKA). An SBP-type zinc finger spans residues 105 to 182 (VPRCQVEGCD…AGHNERRRRS (78 aa)). The Zn(2+) site is built by Cys-108, Cys-113, Cys-130, His-133, Cys-149, Cys-152, His-156, and Cys-168. A Bipartite nuclear localization signal motif is present at residues 165-181 (KKSCRRRLAGHNERRRR). Basic residues predominate over residues 172–182 (LAGHNERRRRS). 3 disordered regions span residues 172 to 196 (LAGH…AHPH), 261 to 306 (FFSD…HEHQ), and 320 to 360 (AAGG…ARVV).

In terms of tissue distribution, expressed in young panicles.

Its subcellular location is the nucleus. Trans-acting factor that binds specifically to the consensus nucleotide sequence 5'-TNCGTACAA-3'. May be involved in panicle development. The chain is Squamosa promoter-binding-like protein 7 (SPL7) from Oryza sativa subsp. indica (Rice).